A 228-amino-acid polypeptide reads, in one-letter code: Heat shock 70-related protein 4 (228 aa).

A disordered region spans residues 57 to 80 (RWHEPPGNTVFDEAHDRPQVRRPD). The segment covering 68–80 (DEAHDRPQVRRPD) has biased composition (basic and acidic residues).

It belongs to the heat shock protein 70 family.

The chain is Heat shock 70-related protein 4 (HSP70.4) from Leishmania major.